The sequence spans 69 residues: Conotoxin Fr3.1 (69 aa).

Positions 1 to 20 (MLKTGVLLLIFLVLFPLATL) are cleaved as a signal peptide. The propeptide occupies 21-51 (QDADQPVERNVENKQDLNLDKRRGMKLLAQR). The residue at position 52 (glutamine 52) is a Pyrrolidone carboxylic acid. Glutamate 54 is modified (4-carboxyglutamate). A 4-hydroxyproline modification is found at proline 58.

It belongs to the conotoxin M superfamily. Expressed by the venom duct.

Its subcellular location is the secreted. Its function is as follows. Probable toxin. The chain is Conotoxin Fr3.1 from Conus frigidus (Frigid cone).